A 378-amino-acid polypeptide reads, in one-letter code: Chaperone protein DnaJ (378 aa).

A J domain is found at 5–69; sequence DYYEVLGVSK…NKRANYDQFG (65 aa). The CR-type zinc-finger motif lies at 135–217; it reads GSEKEISIRK…CHGKGTENKN (83 aa). Positions 148, 151, 165, 168, 191, 194, 205, and 208 each coordinate Zn(2+). CXXCXGXG motif repeat units follow at residues 148-155, 165-172, 191-198, and 205-212; these read CHTCDGEG, CHYCNGSG, CPVCSGSG, and CPTCHGKG.

The protein belongs to the DnaJ family. In terms of assembly, homodimer. Zn(2+) serves as cofactor.

The protein resides in the cytoplasm. Functionally, participates actively in the response to hyperosmotic and heat shock by preventing the aggregation of stress-denatured proteins and by disaggregating proteins, also in an autonomous, DnaK-independent fashion. Unfolded proteins bind initially to DnaJ; upon interaction with the DnaJ-bound protein, DnaK hydrolyzes its bound ATP, resulting in the formation of a stable complex. GrpE releases ADP from DnaK; ATP binding to DnaK triggers the release of the substrate protein, thus completing the reaction cycle. Several rounds of ATP-dependent interactions between DnaJ, DnaK and GrpE are required for fully efficient folding. Also involved, together with DnaK and GrpE, in the DNA replication of plasmids through activation of initiation proteins. The sequence is that of Chaperone protein DnaJ from Staphylococcus saprophyticus subsp. saprophyticus (strain ATCC 15305 / DSM 20229 / NCIMB 8711 / NCTC 7292 / S-41).